The sequence spans 151 residues: ATP synthase subunit b' (151 aa).

The helical transmembrane segment at Thr-18–Phe-38 threads the bilayer.

It belongs to the ATPase B chain family. As to quaternary structure, F-type ATPases have 2 components, F(1) - the catalytic core - and F(0) - the membrane proton channel. F(1) has five subunits: alpha(3), beta(3), gamma(1), delta(1), epsilon(1). F(0) has four main subunits: a(1), b(1), b'(1) and c(10-14). The alpha and beta chains form an alternating ring which encloses part of the gamma chain. F(1) is attached to F(0) by a central stalk formed by the gamma and epsilon chains, while a peripheral stalk is formed by the delta, b and b' chains.

The protein resides in the cellular thylakoid membrane. Its function is as follows. F(1)F(0) ATP synthase produces ATP from ADP in the presence of a proton or sodium gradient. F-type ATPases consist of two structural domains, F(1) containing the extramembraneous catalytic core and F(0) containing the membrane proton channel, linked together by a central stalk and a peripheral stalk. During catalysis, ATP synthesis in the catalytic domain of F(1) is coupled via a rotary mechanism of the central stalk subunits to proton translocation. Component of the F(0) channel, it forms part of the peripheral stalk, linking F(1) to F(0). The b'-subunit is a diverged and duplicated form of b found in plants and photosynthetic bacteria. This is ATP synthase subunit b' from Prochlorococcus marinus (strain MIT 9303).